The following is a 52-amino-acid chain: MLGWALIFLIVAIIAGTLGFSGVAGAASWIAQVLFLVFLALLVISLLGGRRV.

A run of 2 helical transmembrane segments spans residues 4-24 and 29-49; these read WALI…SGVA and WIAQ…LLGG.

The protein belongs to the UPF0391 family.

The protein resides in the cell membrane. The polypeptide is UPF0391 membrane protein Tgr7_2500 (Thioalkalivibrio sulfidiphilus (strain HL-EbGR7)).